The sequence spans 136 residues: Ribonuclease P protein component (136 aa).

Belongs to the RnpA family. In terms of assembly, consists of a catalytic RNA component (M1 or rnpB) and a protein subunit.

It catalyses the reaction Endonucleolytic cleavage of RNA, removing 5'-extranucleotides from tRNA precursor.. Its function is as follows. RNaseP catalyzes the removal of the 5'-leader sequence from pre-tRNA to produce the mature 5'-terminus. It can also cleave other RNA substrates such as 4.5S RNA. The protein component plays an auxiliary but essential role in vivo by binding to the 5'-leader sequence and broadening the substrate specificity of the ribozyme. This is Ribonuclease P protein component from Burkholderia mallei (strain NCTC 10247).